Reading from the N-terminus, the 85-residue chain is Small ribosomal subunit protein bS20 (85 aa).

The interval 1–25 (MANIKSAIKRAKLSEERRAHNASIK) is disordered.

It belongs to the bacterial ribosomal protein bS20 family.

Its function is as follows. Binds directly to 16S ribosomal RNA. The protein is Small ribosomal subunit protein bS20 of Bacillus anthracis (strain A0248).